Here is a 190-residue protein sequence, read N- to C-terminus: Shikimate kinase (190 aa).

13–18 (GSGKTT) provides a ligand contact to ATP. Mg(2+) is bound at residue T17. Substrate-binding residues include D35, R59, and G81. R119 is a binding site for ATP. R138 is a binding site for substrate. An ATP-binding site is contributed by Q155.

The protein belongs to the shikimate kinase family. In terms of assembly, monomer. Mg(2+) serves as cofactor.

Its subcellular location is the cytoplasm. It catalyses the reaction shikimate + ATP = 3-phosphoshikimate + ADP + H(+). It functions in the pathway metabolic intermediate biosynthesis; chorismate biosynthesis; chorismate from D-erythrose 4-phosphate and phosphoenolpyruvate: step 5/7. Functionally, catalyzes the specific phosphorylation of the 3-hydroxyl group of shikimic acid using ATP as a cosubstrate. The sequence is that of Shikimate kinase from Nitrosococcus oceani (strain ATCC 19707 / BCRC 17464 / JCM 30415 / NCIMB 11848 / C-107).